Here is a 545-residue protein sequence, read N- to C-terminus: Threonine--tRNA ligase catalytic subunit (545 aa).

The tract at residues 139–433 (DHRLIGEKLD…LLEHFKGKLP (295 aa)) is catalytic. Residues Cys231, His282, and His410 each coordinate Zn(2+).

This sequence belongs to the class-II aminoacyl-tRNA synthetase family. In terms of assembly, homodimer. Probably interacts with its editing subunit. Zn(2+) is required as a cofactor.

It is found in the cytoplasm. It catalyses the reaction tRNA(Thr) + L-threonine + ATP = L-threonyl-tRNA(Thr) + AMP + diphosphate + H(+). Its function is as follows. Catalyzes the attachment of threonine to tRNA(Thr) in a two-step reaction: L-threonine is first activated by ATP to form Thr-AMP and then transferred to the acceptor end of tRNA(Thr). Also activates L-serine and transfers it to tRNA(Thr) but cannot deacylate incorrectly charged amino acid; unlike most archaea the editing function is found in a freestanding protein. The protein is Threonine--tRNA ligase catalytic subunit of Saccharolobus islandicus (strain Y.G.57.14 / Yellowstone #1) (Sulfolobus islandicus).